Consider the following 654-residue polypeptide: tRNA uridine 5-carboxymethylaminomethyl modification enzyme MnmG (654 aa).

17–22 (GGGHAG) provides a ligand contact to FAD. 289–303 (GPRYCPSIEDKIVKF) contacts NAD(+).

It belongs to the MnmG family. As to quaternary structure, homodimer. Heterotetramer of two MnmE and two MnmG subunits. Requires FAD as cofactor.

The protein resides in the cytoplasm. In terms of biological role, NAD-binding protein involved in the addition of a carboxymethylaminomethyl (cmnm) group at the wobble position (U34) of certain tRNAs, forming tRNA-cmnm(5)s(2)U34. The chain is tRNA uridine 5-carboxymethylaminomethyl modification enzyme MnmG from Prochlorococcus marinus subsp. pastoris (strain CCMP1986 / NIES-2087 / MED4).